The primary structure comprises 137 residues: Histone H2B.3 (137 aa).

The span at K1–D37 shows a compositional bias: basic and acidic residues. The disordered stretch occupies residues K1–K45. 2 positions are modified to N6-acetyllysine: K27 and K28. K133 is covalently cross-linked (Glycyl lysine isopeptide (Lys-Gly) (interchain with G-Cter in ubiquitin)).

Belongs to the histone H2B family. As to quaternary structure, the nucleosome is a histone octamer containing two molecules each of H2A, H2B, H3 and H4 assembled in one H3-H4 heterotetramer and two H2A-H2B heterodimers. The octamer wraps approximately 147 bp of DNA. Can be acetylated to formH2BK33ac and H2BK34ac. In terms of processing, monoubiquitinated to form H2BK143ub1; may give a specific tag for epigenetic transcriptional activation. In terms of tissue distribution, ubiquitous. Highest level in shoots, fruits and young flower buds, including petals, anthers and ovules.

It is found in the nucleus. Its subcellular location is the chromosome. In terms of biological role, core component of nucleosome. Nucleosomes wrap and compact DNA into chromatin, limiting DNA accessibility to the cellular machineries which require DNA as a template. Histones thereby play a central role in transcription regulation, DNA repair, DNA replication and chromosomal stability. DNA accessibility is regulated via a complex set of post-translational modifications of histones, also called histone code, and nucleosome remodeling. The chain is Histone H2B.3 (H2B-3) from Solanum lycopersicum (Tomato).